A 296-amino-acid chain; its full sequence is GTPase Era (296 aa).

Residues 3-170 form the Era-type G domain; that stretch reads KSGFVTIVGR…KELMFKYIPE (168 aa). The G1 stretch occupies residues 11-18; it reads GRPNVGKS. 11–18 contacts GTP; sequence GRPNVGKS. Residues 37-41 are G2; the sequence is QTTRN. The tract at residues 58-61 is G3; that stretch reads DTPG. GTP-binding positions include 58–62 and 120–123; these read DTPGI and NKID. Residues 120-123 are G4; that stretch reads NKID. The G5 stretch occupies residues 149 to 151; the sequence is ISA. In terms of domain architecture, KH type-2 spans 201-278; the sequence is LSEEVPHGIA…YIRLWVKVKE (78 aa).

Belongs to the TRAFAC class TrmE-Era-EngA-EngB-Septin-like GTPase superfamily. Era GTPase family. As to quaternary structure, monomer.

The protein resides in the cytoplasm. Its subcellular location is the cell membrane. Its function is as follows. An essential GTPase that binds both GDP and GTP, with rapid nucleotide exchange. Plays a role in 16S rRNA processing and 30S ribosomal subunit biogenesis and possibly also in cell cycle regulation and energy metabolism. This chain is GTPase Era, found in Clostridium botulinum (strain Kyoto / Type A2).